A 505-amino-acid chain; its full sequence is Betaine aldehyde dehydrogenase (505 aa).

239–244 (GSTATG) provides a ligand contact to NAD(+). The active-site Proton acceptor is Glu261. The active-site Nucleophile is Cys296. Positions 503–505 (SKL) match the Microbody targeting signal motif.

This sequence belongs to the aldehyde dehydrogenase family. In terms of assembly, homodimer.

It is found in the peroxisome. It catalyses the reaction betaine aldehyde + NAD(+) + H2O = glycine betaine + NADH + 2 H(+). It participates in amine and polyamine biosynthesis; betaine biosynthesis via choline pathway; betaine from betaine aldehyde: step 1/1. This chain is Betaine aldehyde dehydrogenase, found in Hordeum vulgare (Barley).